The sequence spans 191 residues: Small ribosomal subunit protein uS9c (191 aa).

A disordered region spans residues 166–191 (TQDSRVKERRKYGLKKARKASQYHKR). Over residues 172 to 191 (KERRKYGLKKARKASQYHKR) the composition is skewed to basic residues.

Belongs to the universal ribosomal protein uS9 family.

It is found in the plastid. The protein localises to the chloroplast. This chain is Small ribosomal subunit protein uS9c (rps9), found in Chlamydomonas reinhardtii (Chlamydomonas smithii).